The chain runs to 78 residues: Sec-independent protein translocase protein TatA (78 aa).

A helical membrane pass occupies residues 1 to 21; the sequence is MFGRIGLPEILLILAIALIIF. Residues 50-78 form a disordered region; that stretch reads EVNEVEEEVKENKSSDVKENEDNKTEKST. Residues 59–78 are compositionally biased toward basic and acidic residues; sequence KENKSSDVKENEDNKTEKST.

This sequence belongs to the TatA/E family. Forms a complex with TatC.

It is found in the cell membrane. In terms of biological role, part of the twin-arginine translocation (Tat) system that transports large folded proteins containing a characteristic twin-arginine motif in their signal peptide across membranes. TatA could form the protein-conducting channel of the Tat system. This Natranaerobius thermophilus (strain ATCC BAA-1301 / DSM 18059 / JW/NM-WN-LF) protein is Sec-independent protein translocase protein TatA.